Reading from the N-terminus, the 737-residue chain is 1,4-alpha-glucan branching enzyme GlgB (737 aa).

The active-site Nucleophile is D419. Residue E472 is the Proton donor of the active site.

This sequence belongs to the glycosyl hydrolase 13 family. GlgB subfamily. Monomer.

It catalyses the reaction Transfers a segment of a (1-&gt;4)-alpha-D-glucan chain to a primary hydroxy group in a similar glucan chain.. It participates in glycan biosynthesis; glycogen biosynthesis. Functionally, catalyzes the formation of the alpha-1,6-glucosidic linkages in glycogen by scission of a 1,4-alpha-linked oligosaccharide from growing alpha-1,4-glucan chains and the subsequent attachment of the oligosaccharide to the alpha-1,6 position. In Mesorhizobium japonicum (strain LMG 29417 / CECT 9101 / MAFF 303099) (Mesorhizobium loti (strain MAFF 303099)), this protein is 1,4-alpha-glucan branching enzyme GlgB.